A 177-amino-acid polypeptide reads, in one-letter code: Probetacellulin (177 aa).

An N-terminal signal peptide occupies residues 1 to 31 (MDPTAPGSSVSSLPLLLVLALGLAILHCVVA). Residues 32-118 (DGNTTRTPET…LFYLQQDRGQ (87 aa)) are Extracellular-facing. Residues asparagine 34, asparagine 42, and asparagine 52 are each glycosylated (N-linked (GlcNAc...) asparagine). Residues 65–105 (HFSRCPKQYKHYCIHGRCRFVVDEQTPSCICEKGYFGARCE) enclose the EGF-like domain. 3 disulfide bridges follow: cysteine 69/cysteine 82, cysteine 77/cysteine 93, and cysteine 95/cysteine 104. Positions 112-177 (LQQDRGQILV…SEDIQETNIA (66 aa)) are cleaved as a propeptide — removed in mature form. A helical membrane pass occupies residues 119 to 139 (ILVVCLIVVMVVFIILVIGVC). The Cytoplasmic portion of the chain corresponds to 140–177 (TCCHPLRKHRKKKKEEKMETLDKDKTPISEDIQETNIA). Positions 153-177 (KEEKMETLDKDKTPISEDIQETNIA) are disordered. Positions 154 to 167 (EEKMETLDKDKTPI) are enriched in basic and acidic residues.

Monomer. Interacts with EGFR and ERBB4. As to expression, found in several mouse tissues including kidney, uterus and liver, as well as in beta tumor cell line and MCF-7 cells. It is not detected in the brain.

The protein resides in the secreted. The protein localises to the extracellular space. It localises to the cell membrane. Its function is as follows. Growth factor that binds to EGFR, ERBB4 and other EGF receptor family members. Potent mitogen for retinal pigment epithelial cells and vascular smooth muscle cells. The sequence is that of Probetacellulin (Btc) from Mus musculus (Mouse).